Here is a 152-residue protein sequence, read N- to C-terminus: Spermine/spermidine N(1)-acetyltransferase (152 aa).

The region spanning I3–L152 is the N-acetyltransferase domain. Residues F82–I84, Q89–K95, and N122–R131 contribute to the acetyl-CoA site. Y129 serves as the catalytic Proton donor.

The protein belongs to the acetyltransferase family.

The enzyme catalyses an alkane-alpha,omega-diamine + acetyl-CoA = an N-acetylalkane-alpha,omega-diamine + CoA + H(+). It catalyses the reaction spermine + acetyl-CoA = N(1)-acetylspermine + CoA + H(+). The catalysed reaction is spermidine + acetyl-CoA = N(1)-acetylspermidine + CoA + H(+). It participates in amine and polyamine degradation; spermine degradation. It functions in the pathway amine and polyamine degradation; spermidine degradation. Putrescine and N(8)-acetylspermidine are competitive inhibitors of spermidine acetylation. Functionally, acetylates both spermidine and spermine at primary propyl amine moieties, with spermine being the preferred substrate. This chain is Spermine/spermidine N(1)-acetyltransferase (bltD), found in Bacillus subtilis (strain 168).